The chain runs to 87 residues: MAYPLLCHYIKAPHSSFPLIPHTSHYILQLVYLHLFHPLPCTQHSHQTMKIEGRRGQMGRLNRAFREKRARFYIFRRCVIMLLRWSD.

The helical transmembrane segment at Leu-19 to Leu-35 threads the bilayer. The segment at Gly-56–Asp-87 is required for DVL/RTFL small polypeptide activity.

This sequence belongs to the DVL/RTFL small polypeptides family.

Its subcellular location is the cell membrane. Its function is as follows. Small polypeptide acting as a regulatory molecule which coordinates cellular responses required for differentiation, growth and development, probably by restricting polar cell proliferation in lateral organs. This Oryza sativa subsp. japonica (Rice) protein is Small polypeptide ROTUNDIFOLIA LIKE 2.